We begin with the raw amino-acid sequence, 126 residues long: MAVCSSSSLILLTVFLSVAVETRPSSDRDEEQVLKSLFGPHLTSLILAPPTSNDSTEGSSGSPEPPTPSEAPVLIHGDRGTASQILRSFLRQREKTRRWGRKPMVAGGGCFGMKMDRIGSISGLGC.

Residues 1–22 (MAVCSSSSLILLTVFLSVAVET) form the signal peptide. Residues 23-102 (RPSSDRDEEQ…REKTRRWGRK (80 aa)) constitute a propeptide that is removed on maturation. A disordered region spans residues 44–80 (SLILAPPTSNDSTEGSSGSPEPPTPSEAPVLIHGDRG). Cysteines 110 and 126 form a disulfide.

It belongs to the natriuretic peptide family. In terms of tissue distribution, brain and spinal cord.

The protein localises to the secreted. Functionally, exhibits natriuretic and vasodepressant activity. Has cGMP-stimulating activity. May help to regulate body fluid homeostasis in a variety of aquatic environments. The polypeptide is C-type natriuretic peptide 2 (Oryzias latipes (Japanese rice fish)).